Here is a 65-residue protein sequence, read N- to C-terminus: Alpha-toxin Lqq4 (65 aa).

Positions 3–65 (RDAYIADDKN…VPIRIPGKCR (63 aa)) constitute an LCN-type CS-alpha/beta domain. A specificity module, loop 1 region spans residues 9-13 (DDKNC). 4 disulfide bridges follow: Cys-13-Cys-64, Cys-17-Cys-37, Cys-23-Cys-47, and Cys-27-Cys-49. Specificity module, loop regions lie at residues 40 to 44 (LGKYG) and 57 to 65 (PIRIPGKCR). Arg-65 carries the post-translational modification Arginine amide.

It belongs to the long (4 C-C) scorpion toxin superfamily. Sodium channel inhibitor family. Alpha subfamily. In terms of processing, the recombinant toxin which is used for activity tests is not amidated. However, C-terminal amidation does not appear to play an important role in activity, since the non-amidated recombinant toxin and the native toxin (which is amidated) show similar activities on all sodium channels tested. Expressed by the venom gland.

The protein localises to the secreted. Its function is as follows. Alpha toxins bind voltage-independently at site-3 of sodium channels (Nav) and inhibit the inactivation of the activated channels, thereby blocking neuronal transmission. Both native and recombinant (non-amidated) toxins inhibit inactivation of Nav1.2/SCN2A (EC(50)=31.2-36.6 nM), Nav1.6/SCN8A (EC(50)=6.9-8.9 nM), and Nav1.7/SCN9A (EC(50)=182.0-260.1 nM). This Leiurus quinquestriatus quinquestriatus (Egyptian scorpion) protein is Alpha-toxin Lqq4.